The primary structure comprises 107 residues: UPF0145 protein Ent638_1382 (107 aa).

This sequence belongs to the UPF0145 family.

The protein is UPF0145 protein Ent638_1382 of Enterobacter sp. (strain 638).